Reading from the N-terminus, the 637-residue chain is MAATPAASGSNPRKFSEKIALHNQKQAEETRAFDELMSDLTVSRVQFQKLQQLRLAQSRAQYYGGSLPNVNQISSSPTDFQPSFHPTDNIRGMRHHGLVERVSRNRLHSSHHRPIEKHGRQCDSSPYGSVYLSPPPDNNWRRTNSDSALHTSASSTKSQDPFMGGAQAMLRAPKPPQRNTSLQDGEIDNFGEVFSFPNAMTEENMLNVTKPLPKQIWEAQKVQCITSRPRSCEVPNIKVFPSSDSNASLSHFQGSLNTGGSLPDLTNLHFPSPLPTPLDPDDTAYANISAENSSGLPAAMTHLGISGSPGMQNTRSNPSIQATMNNNSLASNVNSHTPPGRNNPALHPSLRLSSLSNPSLPTSALGTSPRRRHTPVSPLTLTPGSESNRSISNQFSPTSPMNMPPNSQGVSMDRSPLSLPPLEPPPPYPLYSDQPQPHLHHTQQQMHESLDSQNYQPPSPVPCPPLDLNLANSSLSGFFGDSFFDQQQPTKQGKYLWQQQEQYDMFGSPSSSLPNTNAFFDPNMNLQYSQASLMGLGGSHGSLQDSFHLRPNYLYSNCGGSVPNIILTDDSSNSLSKDISNAVAGVSELGFDADNTFQLDDELKLGPLSLDGLSMLSDPDMVLPDPSIEDSFRSDKL.

The residue at position 66 (Ser66) is a Phosphoserine. The segment covering 105 to 115 (NRLHSSHHRPI) has biased composition (basic residues). Disordered stretches follow at residues 105 to 184 (NRLH…SLQD) and 269 to 288 (HFPS…YANI). A Phosphoserine modification is found at Ser133. Thr143 is subject to Phosphothreonine. Ser145 carries the phosphoserine; by SIK2 modification. Over residues 145–159 (SDSALHTSASSTKSQ) the composition is skewed to polar residues. Thr151 is subject to Phosphothreonine. Phosphoserine is present on Ser293. Residues 299-462 (AMTHLGISGS…QNYQPPSPVP (164 aa)) form a disordered region. The span at 309 to 337 (PGMQNTRSNPSIQATMNNNSLASNVNSHT) shows a compositional bias: polar residues. Positions 344-365 (PALHPSLRLSSLSNPSLPTSAL) are enriched in low complexity. Ser377 and Ser396 each carry phosphoserine. Positions 377–395 (SPLTLTPGSESNRSISNQF) are enriched in polar residues. Positions 396 to 407 (SPTSPMNMPPNS) are enriched in low complexity. Residues 418 to 429 (SLPPLEPPPPYP) show a composition bias toward pro residues. Residues 430–447 (LYSDQPQPHLHHTQQQMH) are compositionally biased toward low complexity. Ser561 carries the phosphoserine modification. A disordered region spans residues 615–637 (MLSDPDMVLPDPSIEDSFRSDKL).

It belongs to the TORC family. As to quaternary structure, binding, as a tetramer, through its N-terminal region, with the bZIP domain of creb1 enhances recruitment of taf4 to the promoter. 'Arg-300' in the bZIP domain of creb1 is essential for this interaction.

Its subcellular location is the nucleus. The protein localises to the cytoplasm. In terms of biological role, transcriptional coactivator for creb1 which activates transcription through both consensus and variant cAMP response element (CRE) sites. Acts as a coactivator, in the SIK/TORC signaling pathway, being active when dephosphorylated and acts independently of creb1 'Ser-119' phosphorylation. Enhances the interaction of creb1 with taf4. Regulates the expression of specific CREB-activated genes such as the steroidogenic gene, StAR. Potent coactivator of ppargc1a and inducer of mitochondrial biogenesis in muscle cells. This Xenopus tropicalis (Western clawed frog) protein is CREB-regulated transcription coactivator 3 (crtc3).